The following is a 121-amino-acid chain: Type II secretion system protein I (121 aa).

The propeptide at M1–G6 is leader sequence. An N-methylmethionine modification is found at M7. A helical membrane pass occupies residues M7–M27.

Belongs to the GSP I family. Type II secretion is composed of four main components: the outer membrane complex, the inner membrane complex, the cytoplasmic secretion ATPase and the periplasm-spanning pseudopilus. Interacts with core component PulG. Post-translationally, cleaved by prepilin peptidase. In terms of processing, methylated by prepilin peptidase at the amino group of the N-terminal methionine once the leader sequence is cleaved by prepilin peptidase.

The protein localises to the cell inner membrane. Functionally, component of the type II secretion system required for the energy-dependent secretion of extracellular factors such as proteases and toxins from the periplasm. Part of the pseudopilus tip complex that is critical for the recognition and binding of secretion substrates. The chain is Type II secretion system protein I (pulI) from Klebsiella pneumoniae.